A 511-amino-acid chain; its full sequence is Ribose import ATP-binding protein RbsA (511 aa).

ABC transporter domains follow at residues 13–249 (VSMD…VGRA) and 260–503 (ALGE…AGIA). 45-52 (GENGAGKS) contributes to the ATP binding site.

It belongs to the ABC transporter superfamily. Ribose importer (TC 3.A.1.2.1) family. The complex is composed of an ATP-binding protein (RbsA), two transmembrane proteins (RbsC) and a solute-binding protein (RbsB).

It localises to the cell inner membrane. It catalyses the reaction D-ribose(out) + ATP + H2O = D-ribose(in) + ADP + phosphate + H(+). Its function is as follows. Part of the ABC transporter complex RbsABC involved in ribose import. Responsible for energy coupling to the transport system. The chain is Ribose import ATP-binding protein RbsA from Roseobacter denitrificans (strain ATCC 33942 / OCh 114) (Erythrobacter sp. (strain OCh 114)).